The sequence spans 707 residues: Polyribonucleotide nucleotidyltransferase (707 aa).

Mg(2+) is bound by residues Asp488 and Asp494. One can recognise a KH domain in the interval 554–613; it reads PRLFTMKINQDKIREVIGKGGETIRSITAETGTEINIAEDGTITIAATTQEAGDAAKKRI. Residues 623–693 form the S1 motif domain; sequence GKVYEGTVVK…DRGRVRLSIK (71 aa).

It belongs to the polyribonucleotide nucleotidyltransferase family. The cofactor is Mg(2+).

It is found in the cytoplasm. The enzyme catalyses RNA(n+1) + phosphate = RNA(n) + a ribonucleoside 5'-diphosphate. Involved in mRNA degradation. Catalyzes the phosphorolysis of single-stranded polyribonucleotides processively in the 3'- to 5'-direction. In Neisseria meningitidis serogroup B (strain ATCC BAA-335 / MC58), this protein is Polyribonucleotide nucleotidyltransferase.